Reading from the N-terminus, the 320-residue chain is Cytochrome f (320 aa).

The signal sequence occupies residues 1-35; sequence MQTRNAFSWLKKQITRSISVSLMIYILTRTSISSA. Heme contacts are provided by Tyr36, Cys56, Cys59, and His60. The chain crosses the membrane as a helical span at residues 286 to 306; that stretch reads VQGLLFFLASVILAQIFLVLK.

This sequence belongs to the cytochrome f family. As to quaternary structure, the 4 large subunits of the cytochrome b6-f complex are cytochrome b6, subunit IV (17 kDa polypeptide, petD), cytochrome f and the Rieske protein, while the 4 small subunits are PetG, PetL, PetM and PetN. The complex functions as a dimer. Heme is required as a cofactor.

The protein localises to the plastid. It is found in the chloroplast thylakoid membrane. Component of the cytochrome b6-f complex, which mediates electron transfer between photosystem II (PSII) and photosystem I (PSI), cyclic electron flow around PSI, and state transitions. This is Cytochrome f from Nicotiana sylvestris (Wood tobacco).